Reading from the N-terminus, the 100-residue chain is NADH-quinone oxidoreductase subunit K (100 aa).

3 consecutive transmembrane segments (helical) span residues 4–24 (TTWV…GLLS), 28–48 (LLFI…LFIA), and 60–80 (IMYL…LALV).

This sequence belongs to the complex I subunit 4L family. As to quaternary structure, NDH-1 is composed of 13 different subunits. Subunits NuoA, H, J, K, L, M, N constitute the membrane sector of the complex.

The protein resides in the cell inner membrane. The enzyme catalyses a quinone + NADH + 5 H(+)(in) = a quinol + NAD(+) + 4 H(+)(out). In terms of biological role, NDH-1 shuttles electrons from NADH, via FMN and iron-sulfur (Fe-S) centers, to quinones in the respiratory chain. The immediate electron acceptor for the enzyme in this species is believed to be ubiquinone. Couples the redox reaction to proton translocation (for every two electrons transferred, four hydrogen ions are translocated across the cytoplasmic membrane), and thus conserves the redox energy in a proton gradient. This chain is NADH-quinone oxidoreductase subunit K, found in Shewanella woodyi (strain ATCC 51908 / MS32).